The following is a 512-amino-acid chain: ATP synthase subunit alpha (512 aa).

Residue 169–176 participates in ATP binding; that stretch reads GDRQTGKT.

Belongs to the ATPase alpha/beta chains family. F-type ATPases have 2 components, CF(1) - the catalytic core - and CF(0) - the membrane proton channel. CF(1) has five subunits: alpha(3), beta(3), gamma(1), delta(1), epsilon(1). CF(0) has three main subunits: a(1), b(2) and c(9-12). The alpha and beta chains form an alternating ring which encloses part of the gamma chain. CF(1) is attached to CF(0) by a central stalk formed by the gamma and epsilon chains, while a peripheral stalk is formed by the delta and b chains.

The protein localises to the cell inner membrane. It carries out the reaction ATP + H2O + 4 H(+)(in) = ADP + phosphate + 5 H(+)(out). Produces ATP from ADP in the presence of a proton gradient across the membrane. The alpha chain is a regulatory subunit. This chain is ATP synthase subunit alpha, found in Rickettsia bellii (strain OSU 85-389).